A 292-amino-acid chain; its full sequence is G1/S-specific cyclin-D3 (292 aa).

The region spanning valine 27–leucine 152 is the Cyclin N-terminal domain. The segment at arginine 256–leucine 292 is disordered. Phosphoserine is present on residues serine 264 and serine 279. Low complexity predominate over residues glycine 272–threonine 285. Phosphothreonine is present on threonine 283.

It belongs to the cyclin family. Cyclin D subfamily. Interacts with the CDK4 and CDK6 protein kinases to form a serine/threonine kinase holoenzyme complex. The cyclin subunit imparts substrate specificity to the complex. Interacts with ATF5. Interacts with EIF3K. Component of the ternary complex cyclin D/CDK4/CDKN1B required for nuclear translocation and modulation of CDK4-mediated kinase activity. Can form similar complexes with either CDKN1A or CDKN2A. In terms of processing, phosphorylation at Thr-283 by MAP kinases is required for ubiquitination and degradation by the DCX(AMBRA1) complex. Post-translationally, ubiquitinated by the DCX(AMBRA1) complex during the transition from G1 to S cell phase, leading to its degradation: ubiquitination is dependent on Thr-283 phosphorylation. The DCX(AMBRA1) complex represents the major regulator of CCND3 stability during the G1/S transition. Polyubiquitinated by the SCF(FBXL2) complex, leading to proteasomal degradation.

It localises to the nucleus. It is found in the cytoplasm. Functionally, regulatory component of the cyclin D3-CDK4 (DC) complex that phosphorylates and inhibits members of the retinoblastoma (RB) protein family including RB1 and regulates the cell-cycle during G(1)/S transition. Phosphorylation of RB1 allows dissociation of the transcription factor E2F from the RB/E2F complex and the subsequent transcription of E2F target genes which are responsible for the progression through the G(1) phase. Hypophosphorylates RB1 in early G(1) phase. Cyclin D-CDK4 complexes are major integrators of various mitogenenic and antimitogenic signals. Component of the ternary complex, cyclin D3/CDK4/CDKN1B, required for nuclear translocation and activity of the cyclin D-CDK4 complex. Shows transcriptional coactivator activity with ATF5 independently of CDK4. The protein is G1/S-specific cyclin-D3 of Mus musculus (Mouse).